Here is a 320-residue protein sequence, read N- to C-terminus: Holliday junction branch migration complex subunit RuvB (320 aa).

The interval 1–172 is large ATPase domain (RuvB-L); sequence MTANVCLDES…FGIISRLEYY (172 aa). ATP contacts are provided by residues arginine 12, glycine 53, lysine 56, threonine 57, threonine 58, 119-121, arginine 162, tyrosine 172, and arginine 209; that span reads EDF. Position 57 (threonine 57) interacts with Mg(2+). Positions 173 to 243 are small ATPAse domain (RuvB-S); sequence TPADLARIVA…LASEALGRME (71 aa). Positions 246 to 320 are head domain (RuvB-H); the sequence is ESGLDQMDRK…KAYRHLNLLG (75 aa). DNA contacts are provided by arginine 301 and arginine 306.

It belongs to the RuvB family. In terms of assembly, homohexamer. Forms an RuvA(8)-RuvB(12)-Holliday junction (HJ) complex. HJ DNA is sandwiched between 2 RuvA tetramers; dsDNA enters through RuvA and exits via RuvB. An RuvB hexamer assembles on each DNA strand where it exits the tetramer. Each RuvB hexamer is contacted by two RuvA subunits (via domain III) on 2 adjacent RuvB subunits; this complex drives branch migration. In the full resolvosome a probable DNA-RuvA(4)-RuvB(12)-RuvC(2) complex forms which resolves the HJ.

Its subcellular location is the cytoplasm. The catalysed reaction is ATP + H2O = ADP + phosphate + H(+). In terms of biological role, the RuvA-RuvB-RuvC complex processes Holliday junction (HJ) DNA during genetic recombination and DNA repair, while the RuvA-RuvB complex plays an important role in the rescue of blocked DNA replication forks via replication fork reversal (RFR). RuvA specifically binds to HJ cruciform DNA, conferring on it an open structure. The RuvB hexamer acts as an ATP-dependent pump, pulling dsDNA into and through the RuvAB complex. RuvB forms 2 homohexamers on either side of HJ DNA bound by 1 or 2 RuvA tetramers; 4 subunits per hexamer contact DNA at a time. Coordinated motions by a converter formed by DNA-disengaged RuvB subunits stimulates ATP hydrolysis and nucleotide exchange. Immobilization of the converter enables RuvB to convert the ATP-contained energy into a lever motion, pulling 2 nucleotides of DNA out of the RuvA tetramer per ATP hydrolyzed, thus driving DNA branch migration. The RuvB motors rotate together with the DNA substrate, which together with the progressing nucleotide cycle form the mechanistic basis for DNA recombination by continuous HJ branch migration. Branch migration allows RuvC to scan DNA until it finds its consensus sequence, where it cleaves and resolves cruciform DNA. In Nitratidesulfovibrio vulgaris (strain ATCC 29579 / DSM 644 / CCUG 34227 / NCIMB 8303 / VKM B-1760 / Hildenborough) (Desulfovibrio vulgaris), this protein is Holliday junction branch migration complex subunit RuvB.